A 2496-amino-acid chain; its full sequence is Non-reducing polyketide synthase adrD (2496 aa).

Residues 15–254 (LVFGPQIAEI…HHASHITAVQ (240 aa)) are N-terminal acylcarrier protein transacylase domain (SAT). The Ketosynthase family 3 (KS3) domain occupies 387 to 808 (ATPIAITGMG…GSNAALVVKQ (422 aa)). Residues C552, H687, and H726 each act as for beta-ketoacyl synthase activity in the active site. The malonyl-CoA:ACP transacylase (MAT) domain stretch occupies residues 914–1223 (LCFGGQNGNE…QSLDLGGPQG (310 aa)). The active-site For acyl/malonyl transferase activity is S1001. Positions 1295-1423 (KEFVQLLTKQ…GEISLHPFGQ (129 aa)) are N-terminal hotdog fold. Residues 1295–1602 (KEFVQLLTKQ…FTSVSIAGLA (308 aa)) form the PKS/mFAS DH domain. Residues 1296-1601 (EFVQLLTKQP…EFTSVSIAGL (306 aa)) form a product template (PT) domain region. H1326 functions as the Proton acceptor; for dehydratase activity in the catalytic mechanism. The tract at residues 1451–1602 (ESSGLKGFAV…FTSVSIAGLA (152 aa)) is C-terminal hotdog fold. The Proton donor; for dehydratase activity role is filled by D1509. The segment covering 1615-1629 (EKASPDLSLRNDSKV) has biased composition (basic and acidic residues). Residues 1615–1645 (EKASPDLSLRNDSKVDVNPTPQNTAPVVQPT) are disordered. A compositionally biased stretch (polar residues) spans 1633–1645 (PTPQNTAPVVQPT). Residues 1652–1726 (PGYFVVVQEM…ALVQTIFPDA (75 aa)) enclose the Carrier domain. An O-(pantetheine 4'-phosphoryl)serine modification is found at S1686. Residues 1888-2121 (QHRSEHHLLK…GFQWVDWTHN (234 aa)) form a methyltransferase (CMeT) domain region. The interval 2151–2496 (RVMNEETVPY…YEFLRDHVRY (346 aa)) is thioesterase (TE) domain. Residues S2274 and D2433 each act as for thioesterase activity in the active site.

The enzyme catalyses 3 malonyl-CoA + acetyl-CoA + 2 S-adenosyl-L-methionine = 3,5-dimethylorsellinate + 2 S-adenosyl-L-homocysteine + 3 CO2 + 4 CoA. It participates in secondary metabolite biosynthesis; terpenoid biosynthesis. Non-reducing polyketide synthase; part of the gene cluster that mediates the biosynthesis of andrastins, meroterpenoid compounds that exhibit inhibitory activity against ras farnesyltransferase, suggesting that they could be promising leads for antitumor agents. The first step of the pathway is the synthesis of 3,5-dimethylorsellinic acid (DMOA) by the polyketide synthase adrD via condensation of one acetyl-CoA starter unit with 3 malonyl-CoA units and 2 methylations. DMAO is then converted to farnesyl-DMAO by the prenyltransferase adrG. The methyltransferase adrK catalyzes the methylation of the carboxyl group of farnesyl-DMAO to farnesyl-DMAO methyl ester which is further converted to epoxyfarnesyl-DMAO methyl ester by the FAD-dependent monooxygenase adrH. The terpene cyclase adrI then catalyzes the carbon skeletal rearrangement to generate the andrastin E, the first compound in the pathway having the andrastin scaffold, with the tetracyclic ring system. The post-cyclization tailoring enzymes adrF, adrE, adrJ, and adrA, are involved in the conversion of andrastin E into andrastin A. The short chain dehydrogenase adrF is responsible for the oxidation of the C-3 a hydroxyl group of andrastin E to yield the corresponding ketone, andrastin D. The ketoreductase adrE stereoselectively reduces the carbonyl moiety to reverse the stereochemistry of the C-3 position to yield andrastin F. The acetyltransferase adrJ is the acetyltransferase that attaches the acetyl group to the C-3 hydroxyl group of andrastin F to yield andrastin C. Finally, the cytochrome P450 monooxygenase adrA catalyzes two sequential oxidation reactions of the C-23 methyl group, to generate the corresponding alcohol andrastin B, and aldehyde andrastin A. This Penicillium rubens (strain ATCC 28089 / DSM 1075 / NRRL 1951 / Wisconsin 54-1255) (Penicillium chrysogenum) protein is Non-reducing polyketide synthase adrD.